A 169-amino-acid polypeptide reads, in one-letter code: Spore protein SP21 (169 aa).

2 disordered regions span residues 1-21 (MADL…REWD) and 150-169 (QPKR…HIKA). A sHSP domain is found at 47 to 159 (QGPPAFVPAF…QPKRIQVASS (113 aa)).

This sequence belongs to the small heat shock protein (HSP20) family.

Functionally, may stabilize cellular components during stress and spore formation. The chain is Spore protein SP21 (hspA) from Stigmatella aurantiaca (strain DW4/3-1).